A 490-amino-acid polypeptide reads, in one-letter code: Ribulose bisphosphate carboxylase large chain (490 aa).

Substrate contacts are provided by Asn127 and Thr177. Lys179 functions as the Proton acceptor in the catalytic mechanism. Lys181 is a binding site for substrate. The Mg(2+) site is built by Lys205, Asp207, and Glu208. An N6-carboxylysine modification is found at Lys205. The Proton acceptor role is filled by His297. Substrate is bound by residues Arg298, His330, and Ser382.

The protein belongs to the RuBisCO large chain family. Type I subfamily. As to quaternary structure, heterohexadecamer of 8 large chains and 8 small chains. Mg(2+) is required as a cofactor.

The protein resides in the plastid. It is found in the chloroplast. The catalysed reaction is 2 (2R)-3-phosphoglycerate + 2 H(+) = D-ribulose 1,5-bisphosphate + CO2 + H2O. The enzyme catalyses D-ribulose 1,5-bisphosphate + O2 = 2-phosphoglycolate + (2R)-3-phosphoglycerate + 2 H(+). In terms of biological role, ruBisCO catalyzes two reactions: the carboxylation of D-ribulose 1,5-bisphosphate, the primary event in carbon dioxide fixation, as well as the oxidative fragmentation of the pentose substrate in the photorespiration process. Both reactions occur simultaneously and in competition at the same active site. In Detonula confervacea (Marine diatom), this protein is Ribulose bisphosphate carboxylase large chain.